Consider the following 199-residue polypeptide: Holliday junction branch migration complex subunit RuvA (199 aa).

The interval 1–63 (MIGCLIGEVF…EDAQQLYGFS (63 aa)) is domain I. Residues 64–142 (DAQEKTIFRT…TLAQGTSSAA (79 aa)) are domain II. Residues 143–150 (ALPQIQFV) are flexible linker. The domain III stretch occupies residues 150-199 (VSNSPVAEAEAALQSLGYKPLEAQKAVAAVKADYTESADIIRAALKSMMK).

This sequence belongs to the RuvA family. Homotetramer. Forms an RuvA(8)-RuvB(12)-Holliday junction (HJ) complex. HJ DNA is sandwiched between 2 RuvA tetramers; dsDNA enters through RuvA and exits via RuvB. An RuvB hexamer assembles on each DNA strand where it exits the tetramer. Each RuvB hexamer is contacted by two RuvA subunits (via domain III) on 2 adjacent RuvB subunits; this complex drives branch migration. In the full resolvosome a probable DNA-RuvA(4)-RuvB(12)-RuvC(2) complex forms which resolves the HJ.

The protein localises to the cytoplasm. The RuvA-RuvB-RuvC complex processes Holliday junction (HJ) DNA during genetic recombination and DNA repair, while the RuvA-RuvB complex plays an important role in the rescue of blocked DNA replication forks via replication fork reversal (RFR). RuvA specifically binds to HJ cruciform DNA, conferring on it an open structure. The RuvB hexamer acts as an ATP-dependent pump, pulling dsDNA into and through the RuvAB complex. HJ branch migration allows RuvC to scan DNA until it finds its consensus sequence, where it cleaves and resolves the cruciform DNA. This Acinetobacter baumannii (strain SDF) protein is Holliday junction branch migration complex subunit RuvA.